Consider the following 850-residue polypeptide: Mitogen-activated protein kinase kinase kinase 11 (850 aa).

A Phosphoserine modification is found at Ser-11. Residues 16–35 (WNGSGSGGGGGTGGVRPEGS) form a disordered region. The span at 17–31 (NGSGSGGGGGTGGVR) shows a compositional bias: gly residues. Position 35 is a phosphoserine (Ser-35). An SH3 domain is found at 42 to 106 (YANPVWTALF…PSNYVSRGGG (65 aa)). Residues 118 to 380 (LRLEEVIGIG…ASILQQLEAL (263 aa)) enclose the Protein kinase domain. ATP is bound by residues 124–132 (IGIGGFGKV) and Lys-145. The active-site Proton acceptor is Asp-242. Position 278 is a phosphothreonine; by autocatalysis (Thr-278). Phosphoserine; by autocatalysis and MAP4K1 is present on Ser-282. Residue Ser-395 is modified to Phosphoserine. Leucine-zipper stretches follow at residues 404 to 425 (IQGL…EEEL) and 439 to 460 (LRRR…ELTL). Residues Ser-508 and Ser-525 each carry the phosphoserine modification. The interval 535 to 644 (QLEPTESGQT…SSGTPKLIQR (110 aa)) is disordered. The span at 538-547 (PTESGQTWGR) shows a compositional bias: polar residues. Residues Ser-549, Ser-556, and Ser-557 each carry the phosphoserine modification. Residues 551 to 563 (RRLEDSSNGERRA) are compositionally biased toward basic and acidic residues. Low complexity predominate over residues 598 to 610 (SSPLGSPSTPPAL). Ser-655 bears the Phosphoserine mark. The disordered stretch occupies residues 657–850 (GLGRDLQPPG…QAPWAPEAGP (194 aa)). Residues 677–693 (TAPPPAQMPSPCPPELP) show a composition bias toward pro residues. The segment covering 700–711 (LSQTTPDAHSSP) has biased composition (polar residues). Ser-709 bears the Phosphoserine mark. Phosphothreonine is present on Thr-712. A phosphoserine mark is found at Ser-728, Ser-731, Ser-743, Ser-751, Ser-761, Ser-773, Ser-792, Ser-796, and Ser-818. Residues 763 to 776 (PLGLISRPRPSPLR) show a composition bias toward low complexity. Residues 790–802 (RPSPLPSPQPAPR) are compositionally biased toward pro residues. The segment covering 803-819 (RAPWTLFPDSDPFWDSP) has biased composition (low complexity).

The protein belongs to the protein kinase superfamily. STE Ser/Thr protein kinase family. MAP kinase kinase kinase subfamily. Homodimer; undergoes dimerization during activation. Interacts with MAP2K4/MKK4 and MAP2K7/MKK7. Found in a complex with SH3RF1, RAC1, MAP2K7/MKK7, MAPK8IP1/JIP1 and MAPK8/JNK1. It depends on Mg(2+) as a cofactor. In terms of processing, autophosphorylation on serine and threonine residues within the activation loop plays a role in enzyme activation. Thr-278 is likely to be the main autophosphorylation site. Phosphorylation of Ser-556 and Ser-557 is induced by CDC42.

It localises to the cytoplasm. The protein resides in the cytoskeleton. It is found in the microtubule organizing center. The protein localises to the centrosome. The catalysed reaction is L-seryl-[protein] + ATP = O-phospho-L-seryl-[protein] + ADP + H(+). It carries out the reaction L-threonyl-[protein] + ATP = O-phospho-L-threonyl-[protein] + ADP + H(+). Homodimerization via the leucine zipper domains is required for autophosphorylation and subsequent activation. Its function is as follows. Activates the JUN N-terminal pathway. Required for serum-stimulated cell proliferation and for mitogen and cytokine activation of MAPK14 (p38), MAPK3 (ERK) and MAPK8 (JNK1) through phosphorylation and activation of MAP2K4/MKK4 and MAP2K7/MKK7. Plays a role in mitogen-stimulated phosphorylation and activation of BRAF, but does not phosphorylate BRAF directly. Influences microtubule organization during the cell cycle. The sequence is that of Mitogen-activated protein kinase kinase kinase 11 (Map3k11) from Mus musculus (Mouse).